The primary structure comprises 307 residues: Transcription initiation factor IIB (307 aa).

2 consecutive repeat copies span residues 123 to 206 and 217 to 298.

The protein belongs to the TFIIB family.

Functionally, stabilizes TBP binding to an archaeal box-A promoter. Also responsible for recruiting RNA polymerase II to the pre-initiation complex (DNA-TBP-TFIIB). This is Transcription initiation factor IIB from Sulfolobus acidocaldarius (strain ATCC 33909 / DSM 639 / JCM 8929 / NBRC 15157 / NCIMB 11770).